We begin with the raw amino-acid sequence, 225 residues long: Ribonuclease 3 (225 aa).

The 123-residue stretch at Met-7–Gly-129 folds into the RNase III domain. Glu-42 contributes to the Mg(2+) binding site. Asp-46 is a catalytic residue. Asp-115 and Glu-118 together coordinate Mg(2+). The active site involves Glu-118. Positions Asp-155–Arg-225 constitute a DRBM domain.

This sequence belongs to the ribonuclease III family. In terms of assembly, homodimer. The cofactor is Mg(2+).

The protein localises to the cytoplasm. It carries out the reaction Endonucleolytic cleavage to 5'-phosphomonoester.. In terms of biological role, digests double-stranded RNA. Involved in the processing of primary rRNA transcript to yield the immediate precursors to the large and small rRNAs (23S and 16S). Processes some mRNAs, and tRNAs when they are encoded in the rRNA operon. Processes pre-crRNA and tracrRNA of type II CRISPR loci if present in the organism. The sequence is that of Ribonuclease 3 from Shewanella sediminis (strain HAW-EB3).